Reading from the N-terminus, the 95-residue chain is uncharacterized protein (95 aa).

A helical membrane pass occupies residues 27–47 (SFGLAIIGILLIACEIILFLT).

It localises to the membrane. This is an uncharacterized protein from Homo sapiens (Human).